The following is a 410-amino-acid chain: WD repeat and FYVE domain-containing protein 1 (410 aa).

6 WD repeats span residues 22–61 (GHQD…QYWP), 66–105 (TMAS…NKMN), 112–150 (AHQN…NMLG), 153–192 (FFTS…CSVI), 197–236 (GHEG…GRTL), and 240–279 (GHHD…EEAP). The FYVE-type zinc-finger motif lies at 281–352 (WLESDSCQKC…VCDSCYDSIK (72 aa)). Positions 287, 290, 314, 317, 322, 325, 344, and 347 each coordinate Zn(2+). One copy of the WD 7 repeat lies at 364–403 (EGKHNISHMSMDIARGLMVTCGTDRIVKIWDMTPVVGCSL). Position 408 is a phosphoserine (S408).

Binds PtdIns3P in vitro with high specificity over other phosphoinositides. Interacts (via WD repeat 2) with tyrosine-phosphorylated TLR3 (via TIR domain) in response to poly(I:C). Interacts with TICAM1 in response to poly(I:C). Interacts with TLR4 in response to LPS.

The protein resides in the early endosome. In terms of biological role, positively regulates TLR3- and TLR4-mediated signaling pathways by bridging the interaction between TLR3 or TLR4 and TICAM1. Promotes TLR3/4 ligand-induced activation of transcription factors IRF3 and NF-kappa-B, as well as the production of IFN-beta and inflammatory cytokines. In Homo sapiens (Human), this protein is WD repeat and FYVE domain-containing protein 1 (WDFY1).